A 336-amino-acid polypeptide reads, in one-letter code: uncharacterized protein (336 aa).

Residues 123–323 (KTLMRDSGVP…YSSLINGILD (201 aa)) form the ATP-grasp domain.

It belongs to the D-alanine--D-alanine ligase family.

In terms of biological role, could be involved in the biosynthesis of a cell wall component. This is an uncharacterized protein from Sinorhizobium fredii (strain NBRC 101917 / NGR234).